Here is a 101-residue protein sequence, read N- to C-terminus: Chaperone modulatory protein CbpM (101 aa).

The protein belongs to the CbpM family.

Its function is as follows. Interacts with CbpA and inhibits both the DnaJ-like co-chaperone activity and the DNA binding activity of CbpA. Together with CbpA, modulates the activity of the DnaK chaperone system. Does not inhibit the co-chaperone activity of DnaJ. The chain is Chaperone modulatory protein CbpM from Pseudomonas putida (strain ATCC 47054 / DSM 6125 / CFBP 8728 / NCIMB 11950 / KT2440).